We begin with the raw amino-acid sequence, 83 residues long: Small ribosomal subunit protein uS17 (83 aa).

The protein belongs to the universal ribosomal protein uS17 family. In terms of assembly, part of the 30S ribosomal subunit.

One of the primary rRNA binding proteins, it binds specifically to the 5'-end of 16S ribosomal RNA. This chain is Small ribosomal subunit protein uS17, found in Pseudoalteromonas atlantica (strain T6c / ATCC BAA-1087).